The following is a 181-amino-acid chain: SRP-independent targeting protein 2 (181 aa).

Residues 1–15 (MAGKAGRKQASSNAK) are Cytoplasmic-facing. The chain crosses the membrane as a helical span at residues 16-36 (IIQGLYKQVSLFLGMAIVRLF). At 37–45 (ISRKVTIGQ) the chain is on the lumenal side. Residues 46–66 (WIKLVALNVPMFVALYIIVLS) form a helical membrane-spanning segment. The Cytoplasmic portion of the chain corresponds to 67 to 89 (GKPKYDGNRVVKQGIDLNDNTNL). A helical membrane pass occupies residues 90 to 110 (ISYFFDLIYLSLFGNIGIIAF). Over 111 to 112 (RT) the chain is Lumenal. Residues 113-133 (FKFWWCLLLCPIYAGYKLYGL) form a helical membrane-spanning segment. Residues 134–181 (KNMFMPGAQQTQADNRSKNANEGQSKSKRQMKRERRGETDSKIKYKYR) are Cytoplasmic-facing. Over residues 144–157 (TQADNRSKNANEGQ) the composition is skewed to polar residues. The interval 144-181 (TQADNRSKNANEGQSKSKRQMKRERRGETDSKIKYKYR) is disordered. Residues 168–181 (RRGETDSKIKYKYR) show a composition bias toward basic and acidic residues.

The protein belongs to the TMEM208 family. Interacts with SND1, PHO88/SND3 and the translocon complex subunit SEC61. ENV10/SND2 and PHO88/SND3 form a complex with the translocon in the endoplasmic reticulum membrane.

It localises to the endoplasmic reticulum membrane. In terms of biological role, functions in the SND pathway, a SRP (signal recognition particle) and GET (guided entry of tail-anchored proteins) independent pathway for targeting a broad range of substrate proteins to the endoplasmic reticulum. SND functions in parallel to GET in targeting proteins with downstream hydrophobic motifs. Involved in vacuolar processing and morphology. This chain is SRP-independent targeting protein 2, found in Saccharomyces cerevisiae (strain ATCC 204508 / S288c) (Baker's yeast).